The sequence spans 114 residues: Ribosome-binding factor A (114 aa).

The protein belongs to the RbfA family. Monomer. Binds 30S ribosomal subunits, but not 50S ribosomal subunits or 70S ribosomes.

It localises to the cytoplasm. Its function is as follows. One of several proteins that assist in the late maturation steps of the functional core of the 30S ribosomal subunit. Associates with free 30S ribosomal subunits (but not with 30S subunits that are part of 70S ribosomes or polysomes). Required for efficient processing of 16S rRNA. May interact with the 5'-terminal helix region of 16S rRNA. This is Ribosome-binding factor A from Listeria welshimeri serovar 6b (strain ATCC 35897 / DSM 20650 / CCUG 15529 / CIP 8149 / NCTC 11857 / SLCC 5334 / V8).